The chain runs to 341 residues: tRNA N6-adenosine threonylcarbamoyltransferase (341 aa).

Residues H115 and H119 each contribute to the Fe cation site. Residues L138–G142, D171, G184, and N276 each bind substrate. D304 contacts Fe cation.

The protein belongs to the KAE1 / TsaD family. The cofactor is Fe(2+).

It is found in the cytoplasm. The catalysed reaction is L-threonylcarbamoyladenylate + adenosine(37) in tRNA = N(6)-L-threonylcarbamoyladenosine(37) in tRNA + AMP + H(+). Its function is as follows. Required for the formation of a threonylcarbamoyl group on adenosine at position 37 (t(6)A37) in tRNAs that read codons beginning with adenine. Is involved in the transfer of the threonylcarbamoyl moiety of threonylcarbamoyl-AMP (TC-AMP) to the N6 group of A37, together with TsaE and TsaB. TsaD likely plays a direct catalytic role in this reaction. The chain is tRNA N6-adenosine threonylcarbamoyltransferase from Stenotrophomonas maltophilia (strain K279a).